Here is a 354-residue protein sequence, read N- to C-terminus: Cyclin-D1-2 (354 aa).

Disordered regions lie at residues 37 to 74 and 331 to 354; these read FFQQ…EEEE and TTAT…RRKM. Low complexity-rich tracts occupy residues 44–66 and 331–346; these read PAPA…AGSC and TTAT…VSSS.

This sequence belongs to the cyclin family. Cyclin D subfamily.

This chain is Cyclin-D1-2 (CYCD1-2), found in Oryza sativa subsp. japonica (Rice).